The sequence spans 320 residues: Small ribosomal subunit protein uS2 (320 aa).

The disordered stretch occupies residues 254-320 (GDAAKAALPV…APATTGPVSE (67 aa)). Residues 272–282 (VSAKNEAKSDD) show a composition bias toward basic and acidic residues. Over residues 308-320 (AEAAPATTGPVSE) the composition is skewed to low complexity.

The protein belongs to the universal ribosomal protein uS2 family.

This is Small ribosomal subunit protein uS2 from Clavibacter sepedonicus (Clavibacter michiganensis subsp. sepedonicus).